Here is a 115-residue protein sequence, read N- to C-terminus: Salivary anti-complement protein (115 aa).

Residues 1-22 form the signal peptide; the sequence is MKFFYLIFSAIFFLADPALVKC. Cystine bridges form between C26/C108, C41/C92, and C83/C101.

In terms of assembly, may form multimers. As to expression, salivary gland (at protein level).

The protein resides in the secreted. In terms of biological role, salivary protein that inhibits the classical pathway of complement system activation in the host while having no inhibitory effect on the alternative or lectin pathways. Prevent cleavage of host C4 and consequently impairs the activation of factors downstream of C4b in the complement cascade. The sequence is that of Salivary anti-complement protein from Lutzomyia longipalpis (Sand fly).